Reading from the N-terminus, the 498-residue chain is Glutathione synthetase large chain (498 aa).

Arg128 is a binding site for substrate. Residue Glu146 coordinates ATP. Residues Glu146 and Asn148 each coordinate Mg(2+). Residues 150 to 153 (ISVS), 233 to 235 (ERN), Gln239, and 291 to 294 (RVGY) contribute to the substrate site. ATP is bound at residue Lys330. Ser356 is modified (phosphoserine). Residues 387 to 396 (KPQREGGGNN), Tyr398, 420 to 423 (MRYI), and Glu446 each bind ATP. Mg(2+) is bound at residue Glu391. Arg473 is a binding site for substrate. Residues Lys475 and Glu481 each contribute to the ATP site. A substrate-binding site is contributed by 484 to 485 (VA).

Belongs to the eukaryotic GSH synthase family. Heterodimer composed of a large and a small chain. The cofactor is Mg(2+).

The enzyme catalyses gamma-L-glutamyl-L-cysteine + glycine + ATP = glutathione + ADP + phosphate + H(+). Its pathway is sulfur metabolism; glutathione biosynthesis; glutathione from L-cysteine and L-glutamate: step 2/2. This chain is Glutathione synthetase large chain (gsa1), found in Schizosaccharomyces pombe (strain 972 / ATCC 24843) (Fission yeast).